Reading from the N-terminus, the 174-residue chain is Gamma-crystallin F (174 aa).

2 consecutive Beta/gamma crystallin 'Greek key' domains span residues 2 to 40 and 41 to 83; these read GKIT…RVDS and GCWM…RLIP. The segment at 84-87 is connecting peptide; sequence HTGS. 2 consecutive Beta/gamma crystallin 'Greek key' domains span residues 88–128 and 129–171; these read HRLR…NVLE and GWWV…RRAV.

The protein belongs to the beta/gamma-crystallin family.

Crystallins are the dominant structural components of the vertebrate eye lens. In Bos taurus (Bovine), this protein is Gamma-crystallin F (CRYGF).